We begin with the raw amino-acid sequence, 289 residues long: G1/S-specific cyclin-D2 (289 aa).

The 126-residue stretch at 26–151 folds into the Cyclin N-terminal domain; sequence LQNLLTIEER…VLGKLKWNLA (126 aa). The segment at 264–289 is disordered; the sequence is QHNAGSKSVEDPDQATTPTDVRDVDL. Ser271 carries the phosphoserine modification. Residue Thr280 is modified to Phosphothreonine.

This sequence belongs to the cyclin family. Cyclin D subfamily. As to quaternary structure, interacts with either CDK4 or CDK6 protein kinase to form a serine/threonine kinase holoenzyme complex. The cyclin subunit imparts substrate specificity to the complex. Post-translationally, phosphorylation at Thr-280 by MAP kinases is required for ubiquitination and degradation by the DCX(AMBRA1) complex. Ubiquitinated by the DCX(AMBRA1) complex during the transition from G1 to S cell phase, leading to its degradation: ubiquitination is dependent on Thr-280 phosphorylation. The DCX(AMBRA1) complex represents the major regulator of CCND2 stability during the G1/S transition. Polyubiquitinated by the SCF(FBXL2) complex, leading to proteasomal degradation.

Its subcellular location is the nucleus. It is found in the cytoplasm. The protein resides in the nucleus membrane. Regulatory component of the cyclin D2-CDK4 (DC) complex that phosphorylates and inhibits members of the retinoblastoma (RB) protein family including RB1 and regulates the cell-cycle during G(1)/S transition. Phosphorylation of RB1 allows dissociation of the transcription factor E2F from the RB/E2F complex and the subsequent transcription of E2F target genes which are responsible for the progression through the G(1) phase. Hypophosphorylates RB1 in early G(1) phase. Cyclin D-CDK4 complexes are major integrators of various mitogenenic and antimitogenic signals. This Mus musculus (Mouse) protein is G1/S-specific cyclin-D2.